Here is a 264-residue protein sequence, read N- to C-terminus: tRNA pseudouridine synthase A (264 aa).

Catalysis depends on Asp51, which acts as the Nucleophile. Tyr109 is a substrate binding site.

The protein belongs to the tRNA pseudouridine synthase TruA family. Homodimer.

The enzyme catalyses uridine(38/39/40) in tRNA = pseudouridine(38/39/40) in tRNA. Formation of pseudouridine at positions 38, 39 and 40 in the anticodon stem and loop of transfer RNAs. The sequence is that of tRNA pseudouridine synthase A from Vibrio atlanticus (strain LGP32) (Vibrio splendidus (strain Mel32)).